The sequence spans 333 residues: Fructose-1,6-bisphosphatase class 1 (333 aa).

4 residues coordinate Mg(2+): glutamate 92, aspartate 114, leucine 116, and aspartate 117. Residues 117-120 and asparagine 209 each bind substrate; that span reads DGSS. Glutamate 279 contributes to the Mg(2+) binding site.

This sequence belongs to the FBPase class 1 family. In terms of assembly, homotetramer. Mg(2+) is required as a cofactor.

The protein localises to the cytoplasm. The enzyme catalyses beta-D-fructose 1,6-bisphosphate + H2O = beta-D-fructose 6-phosphate + phosphate. It participates in carbohydrate biosynthesis; gluconeogenesis. This is Fructose-1,6-bisphosphatase class 1 from Alkalilimnicola ehrlichii (strain ATCC BAA-1101 / DSM 17681 / MLHE-1).